We begin with the raw amino-acid sequence, 924 residues long: DNA repair and recombination protein RDH54 (924 aa).

The span at 1–10 shows a compositional bias: basic and acidic residues; it reads MQIPKYENKP. Disordered regions lie at residues 1–21 and 155–183; these read MQIP…GSNK and EALS…NDGG. A compositionally biased stretch (low complexity) spans 168 to 178; the sequence is TTSTTETVPST. The Helicase ATP-binding domain occupies 299-487; it reads LENDSDISGC…FTIIDFINPG (189 aa). Position 346–353 (346–353) interacts with ATP; it reads IPLTGLCK. The short motif at 472 to 475 is the DEGH box element; the sequence is NDLN. A Glycyl lysine isopeptide (Lys-Gly) (interchain with G-Cter in ubiquitin) cross-link involves residue Lys615. The Helicase C-terminal domain occupies 631–790; that stretch reads KLRVLMTLLE…DSEMRNKESS (160 aa).

Belongs to the SNF2/RAD54 helicase family. As to quaternary structure, interacts with RAD51 and DMC1.

The protein resides in the nucleus. It carries out the reaction ATP + H2O = ADP + phosphate + H(+). In terms of biological role, involved in the recombinational repair of double-strand breaks (DSB) in DNA during mitosis and meiosis. Has DNA dependent ATPase activity. Promotes D-loop (displacement loop) formation with RAD51 recombinase. Modifies the topology of double-stranded DNA during the D-loop reaction to facilitate the invasion of the homologous duplex molecule by the initiating single-stranded DNA substrate. Required for adaptation from G2/M checkpoint arrest induced by a double strand break, by participating in monitoring the extent of single-stranded DNA produced by resection of DNA ends. This role is distinct from its roles in recombination. Promotes colocalization of RAD51 and DMC1 during meiotic recombination. Involved in crossover interference. This is DNA repair and recombination protein RDH54 (RDH54) from Saccharomyces cerevisiae (strain YJM789) (Baker's yeast).